A 368-amino-acid chain; its full sequence is Probable dual-specificity RNA methyltransferase RlmN (368 aa).

The active-site Proton acceptor is the Glu109. Positions 115-355 (YPDRVTMCIS…VTVRDTRGQE (241 aa)) constitute a Radical SAM core domain. Cys122 and Cys360 are joined by a disulfide. 3 residues coordinate [4Fe-4S] cluster: Cys129, Cys133, and Cys136. S-adenosyl-L-methionine is bound by residues 184–185 (GE), Ser218, 241–243 (SLH), and Asn317. The active-site S-methylcysteine intermediate is the Cys360.

The protein belongs to the radical SAM superfamily. RlmN family. Requires [4Fe-4S] cluster as cofactor.

The protein resides in the cytoplasm. The enzyme catalyses adenosine(2503) in 23S rRNA + 2 reduced [2Fe-2S]-[ferredoxin] + 2 S-adenosyl-L-methionine = 2-methyladenosine(2503) in 23S rRNA + 5'-deoxyadenosine + L-methionine + 2 oxidized [2Fe-2S]-[ferredoxin] + S-adenosyl-L-homocysteine. The catalysed reaction is adenosine(37) in tRNA + 2 reduced [2Fe-2S]-[ferredoxin] + 2 S-adenosyl-L-methionine = 2-methyladenosine(37) in tRNA + 5'-deoxyadenosine + L-methionine + 2 oxidized [2Fe-2S]-[ferredoxin] + S-adenosyl-L-homocysteine. In terms of biological role, specifically methylates position 2 of adenine 2503 in 23S rRNA and position 2 of adenine 37 in tRNAs. In Streptomyces griseus subsp. griseus (strain JCM 4626 / CBS 651.72 / NBRC 13350 / KCC S-0626 / ISP 5235), this protein is Probable dual-specificity RNA methyltransferase RlmN.